A 460-amino-acid polypeptide reads, in one-letter code: ATP synthase subunit beta (460 aa).

150–157 (GGAGVGKT) contributes to the ATP binding site.

Belongs to the ATPase alpha/beta chains family. In terms of assembly, F-type ATPases have 2 components, CF(1) - the catalytic core - and CF(0) - the membrane proton channel. CF(1) has five subunits: alpha(3), beta(3), gamma(1), delta(1), epsilon(1). CF(0) has three main subunits: a(1), b(2) and c(9-12). The alpha and beta chains form an alternating ring which encloses part of the gamma chain. CF(1) is attached to CF(0) by a central stalk formed by the gamma and epsilon chains, while a peripheral stalk is formed by the delta and b chains.

The protein resides in the cell inner membrane. It carries out the reaction ATP + H2O + 4 H(+)(in) = ADP + phosphate + 5 H(+)(out). Functionally, produces ATP from ADP in the presence of a proton gradient across the membrane. The catalytic sites are hosted primarily by the beta subunits. The polypeptide is ATP synthase subunit beta (Shigella dysenteriae serotype 1 (strain Sd197)).